The primary structure comprises 214 residues: Small ribosomal subunit protein uS5 (214 aa).

The S5 DRBM domain occupies leucine 54–valine 117.

It belongs to the universal ribosomal protein uS5 family. Part of the 30S ribosomal subunit. Contacts protein S4.

Functionally, with S4 and S12 plays an important role in translational accuracy. The protein is Small ribosomal subunit protein uS5 of Saccharolobus solfataricus (strain ATCC 35092 / DSM 1617 / JCM 11322 / P2) (Sulfolobus solfataricus).